The chain runs to 316 residues: Phosducin-like protein 1 (316 aa).

The segment at 1-61 (MEQNILNSIL…EDGDKEYEVD (61 aa)) is disordered. A compositionally biased stretch (basic and acidic residues) spans 12–41 (KFGDGDQERSDIRHNDSGDENDNHSDHEGN). Residues 49 to 61 (EGNEDGDKEYEVD) are compositionally biased toward acidic residues. The 196-residue stretch at 95-290 (SDYAEHREKQ…LLSSYDIIPN (196 aa)) folds into the Phosducin domain. Residues 102-156 (EKQKQKYLQKKYETQKMLEKMCFTTRDQPPPTEEENQLDSDDDDLERIRKARMEQ) are a coiled coil. Residues 175 to 316 (FGYFKQIDSS…RPESDDDNDD (142 aa)) are thioredoxin fold. The segment at 293–316 (KAKNSNWETSLSRKRPESDDDNDD) is disordered.

It belongs to the phosducin family.

It is found in the cytoplasm. Required for normal chemotaxis in response to cAMP and folate. Required for the heterodimerization of the G protein beta and gamma subunits gpbA and gpgA, which is itself thought to be necessary for prenylation of the gamma subunit gpgA and its association with plasma membranes. The chain is Phosducin-like protein 1 (phlp1) from Dictyostelium discoideum (Social amoeba).